The sequence spans 185 residues: Large ribosomal subunit protein uL6 (185 aa).

The protein belongs to the universal ribosomal protein uL6 family. Part of the 50S ribosomal subunit.

This protein binds to the 23S rRNA, and is important in its secondary structure. It is located near the subunit interface in the base of the L7/L12 stalk, and near the tRNA binding site of the peptidyltransferase center. The chain is Large ribosomal subunit protein uL6 from Staphylothermus marinus (strain ATCC 43588 / DSM 3639 / JCM 9404 / F1).